A 332-amino-acid polypeptide reads, in one-letter code: DNA-directed RNA polymerase subunit alpha (332 aa).

The segment at 1–234 is alpha N-terminal domain (alpha-NTD); that stretch reads MTVTVSQVLR…DQLSVFGDFT (234 aa). The segment at 248-332 is alpha C-terminal domain (alpha-CTD); the sequence is VDPVLLRPID…PGVSQYGMLG (85 aa).

The protein belongs to the RNA polymerase alpha chain family. As to quaternary structure, homodimer. The RNAP catalytic core consists of 2 alpha, 1 beta, 1 beta' and 1 omega subunit. When a sigma factor is associated with the core the holoenzyme is formed, which can initiate transcription.

The catalysed reaction is RNA(n) + a ribonucleoside 5'-triphosphate = RNA(n+1) + diphosphate. In terms of biological role, DNA-dependent RNA polymerase catalyzes the transcription of DNA into RNA using the four ribonucleoside triphosphates as substrates. This chain is DNA-directed RNA polymerase subunit alpha, found in Xylella fastidiosa (strain M23).